Reading from the N-terminus, the 199-residue chain is Holliday junction branch migration complex subunit RuvA (199 aa).

The segment at Met-1 to Leu-65 is domain I. Residues Asp-66–Phe-144 are domain II. The segment at Phe-144–Ala-148 is flexible linker. The domain III stretch occupies residues Gly-149–Arg-199.

The protein belongs to the RuvA family. Homotetramer. Forms an RuvA(8)-RuvB(12)-Holliday junction (HJ) complex. HJ DNA is sandwiched between 2 RuvA tetramers; dsDNA enters through RuvA and exits via RuvB. An RuvB hexamer assembles on each DNA strand where it exits the tetramer. Each RuvB hexamer is contacted by two RuvA subunits (via domain III) on 2 adjacent RuvB subunits; this complex drives branch migration. In the full resolvosome a probable DNA-RuvA(4)-RuvB(12)-RuvC(2) complex forms which resolves the HJ.

Its subcellular location is the cytoplasm. The RuvA-RuvB-RuvC complex processes Holliday junction (HJ) DNA during genetic recombination and DNA repair, while the RuvA-RuvB complex plays an important role in the rescue of blocked DNA replication forks via replication fork reversal (RFR). RuvA specifically binds to HJ cruciform DNA, conferring on it an open structure. The RuvB hexamer acts as an ATP-dependent pump, pulling dsDNA into and through the RuvAB complex. HJ branch migration allows RuvC to scan DNA until it finds its consensus sequence, where it cleaves and resolves the cruciform DNA. This chain is Holliday junction branch migration complex subunit RuvA, found in Legionella pneumophila subsp. pneumophila (strain Philadelphia 1 / ATCC 33152 / DSM 7513).